We begin with the raw amino-acid sequence, 3072 residues long: Platelet binding protein GspB (3072 aa).

The signal sequence occupies residues 1–85 (MFFKRQKGQY…AVLGGAVVTS (85 aa)). Disordered stretches follow at residues 117 to 147 (EAAT…SASS), 182 to 254 (SESL…APNV), 876 to 909 (SAST…SVSA), 936 to 969 (SAST…SVSA), 1024 to 2085 (SASV…SVSA), 2106 to 2139 (SAST…SVSA), 2173 to 2223 (VSAS…SVSA), 2250 to 2595 (SAST…SVSA), 2625 to 2965 (TSAS…NASV), and 3014 to 3045 (SQSL…GESE). Positions 118 to 127 (AATTLSSTEA) are enriched in polar residues. Positions 123 to 236 (SSTEANPVES…SSQQSTEASS (114 aa)) are ser-rich region 1 (SSR1). Composition is skewed to low complexity over residues 131–147 (ESLS…SASS) and 182–238 (SESL…SSQT). Residues 237–603 (QTGRRRTRRA…GSKFIDTRAG (367 aa)) are basic region (BR). The interval 604–3028 (SISKSQSTSN…ESQSSSASQS (2425 aa)) is ser-rich region 2 (SSR2). Over residues 3014–3028 (SQSLSESQSSSASQS) the composition is skewed to low complexity. Positions 3038–3042 (LPRTG) match the LPXTG sorting signal motif. Residue Thr-3041 is modified to Pentaglycyl murein peptidoglycan amidated threonine. A propeptide spans 3042–3072 (GESENKASILALGLGALGLAFKKRKKNESED) (removed by sortase).

It belongs to the serine-rich repeat protein (SRRP) family. In terms of assembly, both SSR domains in the unglycosylated protein bind to Asp2 and Asp3; glycosylated protein binds less well. Interacts with the human cell surface glycoprotein GP1BA. In terms of processing, proteolytically cleaved by a metalloprotease. Post-translationally, both SSR1 and SSR2 domains are glycosylated. A truncated derivative (residues 1-2062) contains 105 nmol per nmol of protein, suggesting at least 10% of the apparent molecular weight is due to carbohydrates. Glucose and N-acetylglucosamine are present in a ratio of 30:73 residues per truncated polypeptide, as well as minor amounts of galactose and N-acetylgalactosamine. Glycosylation occurs intracellularly in the Ser-rich regions SSR1 and SSR2. Glycosylation of SSR2 domain may be required to prevent aggregation of GspB. It is probable that most of the Ser residues in SSR1 and SSR2 are O-GlcNAcylated. Sequential glycosylation by sugar transferases are able to generate complex sugar polymorphisms.

The protein localises to the secreted. Its subcellular location is the cell wall. Plays a role in virulence and host-pathogen interactions. Mediates binding to human platelets via interaction with the human cell surface glycoprotein GP1BA. Plays a positive role in biofilm formation, possibly by self-association via the basic region (BR). In Streptococcus gordonii, this protein is Platelet binding protein GspB (gspB).